The sequence spans 359 residues: MSKSRRIGILTSGGDCSGLNAVIRAVVHCASGKGWEVFGIRQATLGLMARPPQVSKLEIDQVDPLLTSGGTMLGTTNKGDPFAFPMPDGSFCDRSSEIIAGYHQLDLDALIGIGGDGSLAILRRLAQQGAINLVGIPKTIDNDIGITEHAIGFDTAVNIATEALDRLHFTAASHSRVMILEVMGRDAGHIALAAGIAGGADVILIPEILYSMDDICYHIKHRQEEGKNYCLIIVSEAVRTQDGEILTLTNRLGQSRYGGIGEYLADQISDRIGAETRVTVLGHIQRGGIASPLDRLVASAFGVAAVNLIEAAKYDYMVAWQNRQVITVPIEEAIAQYKAVNPEDALVKTARGLGIYLGE.

ATP contacts are provided by residues Gly14, Lys78 to Gly79, and Gly115 to Ser118. Asp116 serves as a coordination point for Mg(2+). Substrate is bound by residues Thr139–Asp141, Arg176, Met183–Arg185, Glu236, Arg277, and His283–Arg286. The Proton acceptor role is filled by Asp141.

It belongs to the phosphofructokinase type A (PFKA) family. Mixed-substrate PFK group III subfamily. As to quaternary structure, homodimer or homotetramer. The cofactor is Mg(2+).

The protein localises to the cytoplasm. The catalysed reaction is beta-D-fructose 6-phosphate + ATP = beta-D-fructose 1,6-bisphosphate + ADP + H(+). Its pathway is carbohydrate degradation; glycolysis; D-glyceraldehyde 3-phosphate and glycerone phosphate from D-glucose: step 3/4. Its function is as follows. Catalyzes the phosphorylation of D-fructose 6-phosphate to fructose 1,6-bisphosphate by ATP, the first committing step of glycolysis. This is ATP-dependent 6-phosphofructokinase 1 from Nostoc sp. (strain PCC 7120 / SAG 25.82 / UTEX 2576).